The primary structure comprises 204 residues: GTP cyclohydrolase 1 (204 aa).

The Zn(2+) site is built by Cys-92, His-95, and Cys-165.

Belongs to the GTP cyclohydrolase I family. As to quaternary structure, homomer.

The catalysed reaction is GTP + H2O = 7,8-dihydroneopterin 3'-triphosphate + formate + H(+). The protein operates within cofactor biosynthesis; 7,8-dihydroneopterin triphosphate biosynthesis; 7,8-dihydroneopterin triphosphate from GTP: step 1/1. This chain is GTP cyclohydrolase 1, found in Mycolicibacterium paratuberculosis (strain ATCC BAA-968 / K-10) (Mycobacterium paratuberculosis).